The sequence spans 114 residues: Hemerythrin (114 aa).

Residues His26, His55, Glu59, His74, His78, His102, and Asp107 each coordinate Fe cation.

The protein belongs to the hemerythrin family. Homooctamer.

In terms of biological role, hemerythrin is a respiratory protein in blood cells of certain marine worms. The oxygen-binding site in each chain contains two iron atoms. This is Hemerythrin from Phascolopsis gouldii (Peanut worm).